The chain runs to 255 residues: Type III pantothenate kinase (255 aa).

Residue 12-19 (DIGNSYTK) coordinates ATP. 109–112 (GDDL) is a substrate binding site. Asp111 serves as the catalytic Proton acceptor. Thr133 contacts ATP. Residue Thr185 participates in substrate binding.

The protein belongs to the type III pantothenate kinase family. As to quaternary structure, homodimer. The cofactor is NH4(+). K(+) serves as cofactor.

The protein localises to the cytoplasm. It catalyses the reaction (R)-pantothenate + ATP = (R)-4'-phosphopantothenate + ADP + H(+). It participates in cofactor biosynthesis; coenzyme A biosynthesis; CoA from (R)-pantothenate: step 1/5. Its function is as follows. Catalyzes the phosphorylation of pantothenate (Pan), the first step in CoA biosynthesis. This chain is Type III pantothenate kinase, found in Malacoplasma penetrans (strain HF-2) (Mycoplasma penetrans).